Reading from the N-terminus, the 100-residue chain is Large ribosomal subunit protein uL23 (100 aa).

It belongs to the universal ribosomal protein uL23 family. In terms of assembly, part of the 50S ribosomal subunit. Contacts protein L29, and trigger factor when it is bound to the ribosome.

Its function is as follows. One of the early assembly proteins it binds 23S rRNA. One of the proteins that surrounds the polypeptide exit tunnel on the outside of the ribosome. Forms the main docking site for trigger factor binding to the ribosome. The chain is Large ribosomal subunit protein uL23 from Yersinia enterocolitica serotype O:8 / biotype 1B (strain NCTC 13174 / 8081).